We begin with the raw amino-acid sequence, 331 residues long: Phosphate acyltransferase (331 aa).

This sequence belongs to the PlsX family. Homodimer. Probably interacts with PlsY.

The protein localises to the cytoplasm. The catalysed reaction is a fatty acyl-[ACP] + phosphate = an acyl phosphate + holo-[ACP]. Its pathway is lipid metabolism; phospholipid metabolism. Functionally, catalyzes the reversible formation of acyl-phosphate (acyl-PO(4)) from acyl-[acyl-carrier-protein] (acyl-ACP). This enzyme utilizes acyl-ACP as fatty acyl donor, but not acyl-CoA. The polypeptide is Phosphate acyltransferase (Clostridium acetobutylicum (strain ATCC 824 / DSM 792 / JCM 1419 / IAM 19013 / LMG 5710 / NBRC 13948 / NRRL B-527 / VKM B-1787 / 2291 / W)).